Reading from the N-terminus, the 172-residue chain is Protein LOL2 (172 aa).

Putative zinc finger stretches follow at residues 4-34 (QIVC…VSST), 44-74 (HLIC…VNLV), and 82-112 (HLNC…ITNT).

The protein localises to the nucleus. Its function is as follows. Putative zinc finger that may be involved in programmed cell death and defense response. This is Protein LOL2 (LOL2) from Oryza sativa subsp. japonica (Rice).